The chain runs to 341 residues: Methionine import ATP-binding protein MetN 2 (341 aa).

The ABC transporter domain occupies 2–241 (IELKEVVKEY…PQHAVTKRFV (240 aa)). Residue 38–45 (GFSGAGKS) coordinates ATP.

It belongs to the ABC transporter superfamily. Methionine importer (TC 3.A.1.24) family. In terms of assembly, the complex is composed of two ATP-binding proteins (MetN), two transmembrane proteins (MetI) and a solute-binding protein (MetQ).

It localises to the cell membrane. It catalyses the reaction L-methionine(out) + ATP + H2O = L-methionine(in) + ADP + phosphate + H(+). The catalysed reaction is D-methionine(out) + ATP + H2O = D-methionine(in) + ADP + phosphate + H(+). Part of the ABC transporter complex MetNIQ involved in methionine import. Responsible for energy coupling to the transport system. In Staphylococcus aureus (strain MRSA252), this protein is Methionine import ATP-binding protein MetN 2.